A 710-amino-acid chain; its full sequence is E3 ubiquitin-protein ligase TRIM9 (710 aa).

The segment at 10–50 (CPVCGSFYREPIILPCSHNLCQACARNILVQTPESESPQSR) adopts an RING-type zinc-finger fold. A Phosphothreonine modification is found at Thr-41. A phosphoserine mark is found at Ser-44, Ser-46, Ser-49, and Ser-53. 2 B box-type zinc fingers span residues 163–212 (AAAL…LVPP) and 224–266 (RKVS…VKAL). The Zn(2+) site is built by Cys-168, Cys-171, Cys-193, His-198, Cys-229, His-232, Cys-252, and His-258. Positions 273-340 (HKSQLSQALN…KAQLLARVNK (68 aa)) form a coiled coil. In terms of domain architecture, COS spans 374-432 (IKENDPSGFLQISDALIRRVHLTEDQWGKGTLTPRMTTDFDLSLDNSPLLQSIHQLDFV). The 96-residue stretch at 440–535 (VPATPILQLE…KTLVLQTSEV (96 aa)) folds into the Fibronectin type-III domain. In terms of domain architecture, B30.2/SPRY spans 533-702 (SEVAWFAFDP…LHTGLPVPDF (170 aa)).

In terms of assembly, interacts with SNAP25. In terms of processing, auto-ubiquitinated. As to expression, brain (at protein level). Expressed in fetal and adult brain.

The protein localises to the cytoplasmic vesicle. Its subcellular location is the secretory vesicle. It is found in the synaptic vesicle. The protein resides in the synapse. It localises to the cytoplasm. The protein localises to the cytoskeleton. Its subcellular location is the cell projection. It is found in the dendrite. It catalyses the reaction S-ubiquitinyl-[E2 ubiquitin-conjugating enzyme]-L-cysteine + [acceptor protein]-L-lysine = [E2 ubiquitin-conjugating enzyme]-L-cysteine + N(6)-ubiquitinyl-[acceptor protein]-L-lysine.. It participates in protein modification; protein ubiquitination. Functionally, E3 ubiquitin-protein ligase which ubiquitinates itself in cooperation with an E2 enzyme UBE2D2/UBC4 and serves as a targeting signal for proteasomal degradation. May play a role in regulation of neuronal functions. May act as a regulator of synaptic vesicle exocytosis by controlling the availability of SNAP25 for the SNARE complex formation. The chain is E3 ubiquitin-protein ligase TRIM9 (Trim9) from Rattus norvegicus (Rat).